The sequence spans 151 residues: Lipoprotein signal peptidase (151 aa).

The next 3 helical transmembrane spans lie at 3–23 (LYII…GWIV), 59–79 (WFFY…FYTS), and 85–107 (LYRI…RLHL). Residues Asp-112 and Asp-128 contribute to the active site. The chain crosses the membrane as a helical span at residues 123-143 (IFNVADTALTCGVICVFIAIL).

The protein belongs to the peptidase A8 family.

It is found in the cell membrane. It catalyses the reaction Release of signal peptides from bacterial membrane prolipoproteins. Hydrolyzes -Xaa-Yaa-Zaa-|-(S,diacylglyceryl)Cys-, in which Xaa is hydrophobic (preferably Leu), and Yaa (Ala or Ser) and Zaa (Gly or Ala) have small, neutral side chains.. The protein operates within protein modification; lipoprotein biosynthesis (signal peptide cleavage). Its function is as follows. This protein specifically catalyzes the removal of signal peptides from prolipoproteins. This chain is Lipoprotein signal peptidase, found in Latilactobacillus sakei subsp. sakei (strain 23K) (Lactobacillus sakei subsp. sakei).